The chain runs to 124 residues: Large ribosomal subunit protein bL36m (124 aa).

The protein belongs to the bacterial ribosomal protein bL36 family. As to quaternary structure, component of the mitochondrial large ribosomal subunit (mt-LSU). Mature N.crassa 74S mitochondrial ribosomes consist of a small (37S) and a large (54S) subunit. The 37S small subunit contains a 16S ribosomal RNA (16S mt-rRNA) and 32 different proteins. The 54S large subunit contains a 23S rRNA (23S mt-rRNA) and 42 different proteins. bL36m has a zinc binding site.

Its subcellular location is the mitochondrion. Component of the mitochondrial ribosome (mitoribosome), a dedicated translation machinery responsible for the synthesis of mitochondrial genome-encoded proteins, including at least some of the essential transmembrane subunits of the mitochondrial respiratory chain. The mitoribosomes are attached to the mitochondrial inner membrane and translation products are cotranslationally integrated into the membrane. The chain is Large ribosomal subunit protein bL36m (rtc6) from Neurospora crassa (strain ATCC 24698 / 74-OR23-1A / CBS 708.71 / DSM 1257 / FGSC 987).